A 429-amino-acid chain; its full sequence is Probable M18 family aminopeptidase 2 (429 aa).

3 residues coordinate Zn(2+): His-82, His-156, and His-401.

This sequence belongs to the peptidase M18 family. Zn(2+) is required as a cofactor.

The chain is Probable M18 family aminopeptidase 2 from Pseudomonas putida (strain GB-1).